The sequence spans 372 residues: Glutamate 5-kinase (372 aa).

Residue K14 coordinates ATP. Residues S54, D141, and N153 each coordinate substrate. An ATP-binding site is contributed by 173–174 (TD). In terms of domain architecture, PUA spans 280 to 358 (RGTLVLDAGA…DAIESILGYS (79 aa)).

Belongs to the glutamate 5-kinase family.

The protein localises to the cytoplasm. It carries out the reaction L-glutamate + ATP = L-glutamyl 5-phosphate + ADP. It functions in the pathway amino-acid biosynthesis; L-proline biosynthesis; L-glutamate 5-semialdehyde from L-glutamate: step 1/2. Its function is as follows. Catalyzes the transfer of a phosphate group to glutamate to form L-glutamate 5-phosphate. The protein is Glutamate 5-kinase of Pseudomonas putida (strain GB-1).